The primary structure comprises 249 residues: Metallo-beta-lactamase type 2 (249 aa).

The signal sequence occupies residues 1-22; the sequence is MLKKIKISLILALGLTSLQAFG. Zn(2+)-binding residues include His98, His100, Asp102, His161, and Cys180. Lys183 is a substrate binding site. His222 provides a ligand contact to Zn(2+).

This sequence belongs to the metallo-beta-lactamase superfamily. Class-B beta-lactamase family. Monomer. It depends on Zn(2+) as a cofactor.

It is found in the periplasm. It carries out the reaction a beta-lactam + H2O = a substituted beta-amino acid. Functionally, confers resistance to the different beta-lactams antibiotics (penicillin, cephalosporin and carbapenem) via the hydrolysis of the beta-lactam ring. The polypeptide is Metallo-beta-lactamase type 2 (blaB2) (Elizabethkingia meningoseptica (Chryseobacterium meningosepticum)).